Reading from the N-terminus, the 274-residue chain is Nitrate import ATP-binding protein NrtD (274 aa).

In terms of domain architecture, ABC transporter spans 17–250; it reads LHFDCVGKTF…RPREREAVVE (234 aa). 53–60 lines the ATP pocket; sequence GHSGCGKS.

It belongs to the ABC transporter superfamily. Nitrate/nitrite/cyanate uptake transporter (NitT) (TC 3.A.1.16) family. In terms of assembly, the complex is composed of two ATP-binding proteins (NrtC and NrtD), two transmembrane proteins (NrtB) and a solute-binding protein (NrtA).

It is found in the cell inner membrane. It catalyses the reaction nitrate(out) + ATP + H2O = nitrate(in) + ADP + phosphate + H(+). In terms of biological role, part of the ABC transporter complex NrtABCD involved in nitrate uptake. The complex is probably also involved in nitrite transport. Probably responsible for energy coupling to the transport system. In Synechococcus elongatus (strain ATCC 33912 / PCC 7942 / FACHB-805) (Anacystis nidulans R2), this protein is Nitrate import ATP-binding protein NrtD.